Consider the following 942-residue polypeptide: Protein FAM184B (942 aa).

2 disordered regions span residues Met1 to Ser26 and Gln73 to Asp97. 3 coiled-coil regions span residues Gln89–Ile150, Glu196–Met337, and Ser387–Glu495. Positions Ser486 to Glu542 are disordered. Residues Pro504–Leu513 show a composition bias toward basic and acidic residues. A compositionally biased stretch (acidic residues) spans Thr514 to Arg526. Coiled-coil stretches lie at residues Asn575–Arg619 and Glu686–Phe815. Residues Ala880–Glu934 are disordered. A compositionally biased stretch (polar residues) spans Lys885 to Lys900.

It belongs to the FAM184 family.

This is Protein FAM184B (Fam184b) from Mus musculus (Mouse).